The primary structure comprises 355 residues: Uroporphyrinogen decarboxylase (355 aa).

Residues 27-31, D77, Y154, T209, and H328 contribute to the substrate site; that span reads RQAGR.

Belongs to the uroporphyrinogen decarboxylase family. As to quaternary structure, homodimer.

The protein resides in the cytoplasm. The catalysed reaction is uroporphyrinogen III + 4 H(+) = coproporphyrinogen III + 4 CO2. It functions in the pathway porphyrin-containing compound metabolism; protoporphyrin-IX biosynthesis; coproporphyrinogen-III from 5-aminolevulinate: step 4/4. In terms of biological role, catalyzes the decarboxylation of four acetate groups of uroporphyrinogen-III to yield coproporphyrinogen-III. This is Uroporphyrinogen decarboxylase from Dechloromonas aromatica (strain RCB).